The sequence spans 525 residues: Bifunctional pantoate ligase/cytidylate kinase (525 aa).

The segment at 1-292 is pantoate--beta-alanine ligase; the sequence is MDNVPIIRTV…VGSARLIDNM (292 aa). 44-51 contacts ATP; the sequence is MGALHAGH. Residue His51 is the Proton donor of the active site. A (R)-pantoate-binding site is contributed by Gln75. A beta-alanine-binding site is contributed by Gln75. An ATP-binding site is contributed by 162–165; sequence GQKD. Gln168 is a (R)-pantoate binding site. Residues Ile191 and 199–202 contribute to the ATP site; that span reads LSSR. A cytidylate kinase region spans residues 293-525; the sequence is LLDARLPILA…LYQERFPDRA (233 aa).

The protein in the N-terminal section; belongs to the pantothenate synthetase family. It in the C-terminal section; belongs to the cytidylate kinase family. Type 1 subfamily.

Its subcellular location is the cytoplasm. It carries out the reaction (R)-pantoate + beta-alanine + ATP = (R)-pantothenate + AMP + diphosphate + H(+). It catalyses the reaction CMP + ATP = CDP + ADP. The enzyme catalyses dCMP + ATP = dCDP + ADP. The protein operates within cofactor biosynthesis; (R)-pantothenate biosynthesis; (R)-pantothenate from (R)-pantoate and beta-alanine: step 1/1. Catalyzes the condensation of pantoate with beta-alanine in an ATP-dependent reaction via a pantoyl-adenylate intermediate. In terms of biological role, catalyzes the transfer of a phosphate group from ATP to either CMP or dCMP to form CDP or dCDP and ADP, respectively. The chain is Bifunctional pantoate ligase/cytidylate kinase from Acaryochloris marina (strain MBIC 11017).